A 413-amino-acid chain; its full sequence is MAP kinase-interacting serine/threonine-protein kinase 1 (413 aa).

The interval 1–26 is disordered; it reads MGSSEPLPIVDSDKRRKKKRKTRATD. T22 carries the post-translational modification Phosphothreonine; by PAK2. Position 27 is a phosphoserine; by PAK2 (S27). Residues 37–321 form the Protein kinase domain; sequence QLTSELLGEG…AAQVLQHPWV (285 aa). Residues 43 to 51 and K66 contribute to the ATP site; that span reads LGEGAYAKV. D158 acts as the Proton acceptor in catalysis. Residues S168 and S173 each carry the phosphoserine modification. T197, T202, and T332 each carry phosphothreonine.

It belongs to the protein kinase superfamily. CAMK Ser/Thr protein kinase family. In terms of assembly, interacts with the C-terminal regions of EIF4G1 and EIF4G2. Also binds to dephosphorylated ERK1 and ERK2, and to the p38 kinases. The cofactor is Mg(2+). Dual phosphorylation of Thr-197 and Thr-202 activates the kinase. Phosphorylation of Thr-332 activates the kinase. MAPK3/ERK1 is one of the kinases which activate MKNK1/MNK1. Phosphorylation by PAK2 leads to a reduced phosphorylation of EIF4G1.

It catalyses the reaction L-seryl-[protein] + ATP = O-phospho-L-seryl-[protein] + ADP + H(+). The enzyme catalyses L-threonyl-[protein] + ATP = O-phospho-L-threonyl-[protein] + ADP + H(+). With respect to regulation, phosphorylated and activated by the p38 kinases and kinases in the Erk pathway. Its function is as follows. May play a role in the response to environmental stress and cytokines. Appears to regulate translation by phosphorylating EIF4E, thus increasing the affinity of this protein for the 7-methylguanosine-containing mRNA cap. This chain is MAP kinase-interacting serine/threonine-protein kinase 1 (Mknk1), found in Rattus norvegicus (Rat).